Here is a 351-residue protein sequence, read N- to C-terminus: MKIAVLAGGKSTERNVSLSSGSKITNALRSKGYDATMIDLFLGYELEDGQSYEDVFKSSNTSTDYEISDAVLTEEDIEELRTDGTVGLFGKNVLPILQAADFVFLALHGGDGENGKVQAVLDLNHIKYTGSGSLASGIAMDKAISKEIMLYNNIKTAQFAVLHAKDGIHPQLAFDYPMVVKPNSGGSSIGTRIVHDEAELAESLKDAYRFDDEIIVEEFITGREFSLGVVNGQAMPAIEIVVNDGWYDYEHKFQTGSTTKFVTPPEIEDDVHDEMKRVAVQTMDALGMTNYGRVDFLTNDTGVYVIEANNLPGMTPLSLLPQEAEAAGISYEDLCESIVLGKQKLYDELKK.

The 195-residue stretch at 146–340 (KEIMLYNNIK…YEDLCESIVL (195 aa)) folds into the ATP-grasp domain. 173–226 (AFDYPMVVKPNSGGSSIGTRIVHDEAELAESLKDAYRFDDEIIVEEFITGREFS) provides a ligand contact to ATP. Mg(2+) is bound by residues Asp295, Glu307, and Asn309.

The protein belongs to the D-alanine--D-alanine ligase family. It depends on Mg(2+) as a cofactor. Mn(2+) is required as a cofactor.

The protein localises to the cytoplasm. The enzyme catalyses 2 D-alanine + ATP = D-alanyl-D-alanine + ADP + phosphate + H(+). It participates in cell wall biogenesis; peptidoglycan biosynthesis. Functionally, cell wall formation. In Pediococcus pentosaceus (strain ATCC 25745 / CCUG 21536 / LMG 10740 / 183-1w), this protein is D-alanine--D-alanine ligase.